Reading from the N-terminus, the 460-residue chain is Argininosuccinate lyase (460 aa).

It belongs to the lyase 1 family. Argininosuccinate lyase subfamily.

It localises to the cytoplasm. It catalyses the reaction 2-(N(omega)-L-arginino)succinate = fumarate + L-arginine. It functions in the pathway amino-acid biosynthesis; L-arginine biosynthesis; L-arginine from L-ornithine and carbamoyl phosphate: step 3/3. This is Argininosuccinate lyase from Campylobacter jejuni subsp. doylei (strain ATCC BAA-1458 / RM4099 / 269.97).